Here is a 454-residue protein sequence, read N- to C-terminus: Signal recognition particle protein (454 aa).

Residues 102–109 (GLQGTGKT), 184–188 (DTAGR), and 242–245 (TKMD) contribute to the GTP site.

The protein belongs to the GTP-binding SRP family. SRP54 subfamily. As to quaternary structure, part of the signal recognition particle protein translocation system, which is composed of SRP and FtsY.

It is found in the cytoplasm. The enzyme catalyses GTP + H2O = GDP + phosphate + H(+). Its function is as follows. Involved in targeting and insertion of nascent membrane proteins into the cytoplasmic membrane. Binds to the hydrophobic signal sequence of the ribosome-nascent chain (RNC) as it emerges from the ribosomes. The SRP-RNC complex is then targeted to the cytoplasmic membrane where it interacts with the SRP receptor FtsY. The chain is Signal recognition particle protein from Aquifex aeolicus (strain VF5).